Reading from the N-terminus, the 260-residue chain is MNKKKPLILVTNDDGITAPGIRTLVEVMKELGDVIVVAPDSPQSGMGHAITISDTLFCEQVTIKESYKHKEYSCSGTPADCVKIATQEILHRKPDLCVSGINHGSNSSINVIYSGTMSAAVEAGIEGIPAIGFSLLDYSLNADFEPTRKFIKTITKNVLKNGLPIGVVLNVNIPKLKEAEIKGIKVCRQANAHWEEEFDKRTNPQGREYYWLTGKFVNKDEGKDTDEKALEEGYVSVVPVQFDLTAHHFIKDLSSWSLND.

Residues Asp13, Asp14, Ser44, and Asn102 each coordinate a divalent metal cation.

Belongs to the SurE nucleotidase family. It depends on a divalent metal cation as a cofactor.

The protein localises to the cytoplasm. The enzyme catalyses a ribonucleoside 5'-phosphate + H2O = a ribonucleoside + phosphate. Functionally, nucleotidase that shows phosphatase activity on nucleoside 5'-monophosphates. The protein is 5'-nucleotidase SurE of Christiangramia forsetii (strain DSM 17595 / CGMCC 1.15422 / KT0803) (Gramella forsetii).